The sequence spans 116 residues: Tyrosine-protein phosphatase 10 (116 aa).

The region spanning 1–116 (WRMVWEQNVS…SPTGYGPIVV (116 aa)) is the Tyrosine-protein phosphatase domain. Position 86 (Asp86) interacts with substrate.

It belongs to the protein-tyrosine phosphatase family.

The catalysed reaction is O-phospho-L-tyrosyl-[protein] + H2O = L-tyrosyl-[protein] + phosphate. This Styela plicata (Wrinkled sea squirt) protein is Tyrosine-protein phosphatase 10 (STY-10).